A 129-amino-acid chain; its full sequence is Large-conductance mechanosensitive channel (129 aa).

The next 2 membrane-spanning stretches (helical) occupy residues 10-30 (FAVKGNVVDMAVGVIIGGAFG) and 76-96 (GAFIQNVFDFLIIAIAVFGMV).

This sequence belongs to the MscL family. As to quaternary structure, homopentamer.

The protein localises to the cell inner membrane. Its function is as follows. Channel that opens in response to stretch forces in the membrane lipid bilayer. May participate in the regulation of osmotic pressure changes within the cell. The chain is Large-conductance mechanosensitive channel from Actinobacillus pleuropneumoniae serotype 5b (strain L20).